The following is a 368-amino-acid chain: ICEBs1 integrase (368 aa).

The Core-binding (CB) domain occupies 61–143; that stretch reads VSFPTLISIY…SLSKIFDTAV (83 aa). One can recognise a Tyr recombinase domain in the interval 164–362; the sequence is KKMKFWRPEE…YPNKQKEMAD (199 aa). Residues Arg201, Lys239, His313, Arg316, and His339 contribute to the active site. Tyr349 acts as the O-(3'-phospho-DNA)-tyrosine intermediate in catalysis.

Belongs to the 'phage' integrase family.

In terms of biological role, putative integrase that is involved in the insertion of the integrative and conjugative element ICEBs1. Required for the excision of ICEBs1 from the donor cell genome and subsequent integration in the recipient cell genome. Appears not to be transferred through the mating pore. Integration of ICEBs1 involves an attachment site in the chromosome, attB, and a site in the circular form of ICEBs1, attICEBs1. The polypeptide is ICEBs1 integrase (int) (Bacillus subtilis (strain 168)).